The primary structure comprises 261 residues: Precorrin-6A reductase (261 aa).

The protein belongs to the precorrin-6x reductase family.

The catalysed reaction is precorrin-6B + NADP(+) = precorrin-6A + NADPH + 2 H(+). It functions in the pathway cofactor biosynthesis; adenosylcobalamin biosynthesis; cob(II)yrinate a,c-diamide from precorrin-2 (aerobic route): step 6/10. Its function is as follows. Catalyzes the reduction of the macrocycle of precorrin-6X into precorrin-6Y. This chain is Precorrin-6A reductase (cobK), found in Sinorhizobium sp.